A 228-amino-acid polypeptide reads, in one-letter code: FAS1 domain-containing protein NCU02579 (228 aa).

The first 18 residues, 1–18 (MRFTPYLVLAPTAAVAFA), serve as a signal peptide directing secretion. The disordered stretch occupies residues 50-74 (PAVGLGPAMPPSGAPQADGPANAGG). One can recognise an FAS1 domain in the interval 77 to 225 (SVMLSDVMGR…GEVWILKGVR (149 aa)).

The protein localises to the vacuole. This is FAS1 domain-containing protein NCU02579 from Neurospora crassa (strain ATCC 24698 / 74-OR23-1A / CBS 708.71 / DSM 1257 / FGSC 987).